The chain runs to 1196 residues: DNA-directed RNA polymerase subunit beta (1196 aa).

It belongs to the RNA polymerase beta chain family. As to quaternary structure, the RNAP catalytic core consists of 2 alpha, 1 beta, 1 beta' and 1 omega subunit. When a sigma factor is associated with the core the holoenzyme is formed, which can initiate transcription.

The enzyme catalyses RNA(n) + a ribonucleoside 5'-triphosphate = RNA(n+1) + diphosphate. Its function is as follows. DNA-dependent RNA polymerase catalyzes the transcription of DNA into RNA using the four ribonucleoside triphosphates as substrates. In Lactococcus lactis subsp. cremoris (strain MG1363), this protein is DNA-directed RNA polymerase subunit beta.